A 601-amino-acid polypeptide reads, in one-letter code: Elongation factor 4 (601 aa).

Residues 6-188 form the tr-type G domain; that stretch reads QFIRNFSIIA…AITKEIPAPK (183 aa). Residues 18–23 and 135–138 contribute to the GTP site; these read DHGKST and NKID.

This sequence belongs to the TRAFAC class translation factor GTPase superfamily. Classic translation factor GTPase family. LepA subfamily.

The protein resides in the cell inner membrane. The enzyme catalyses GTP + H2O = GDP + phosphate + H(+). Functionally, required for accurate and efficient protein synthesis under certain stress conditions. May act as a fidelity factor of the translation reaction, by catalyzing a one-codon backward translocation of tRNAs on improperly translocated ribosomes. Back-translocation proceeds from a post-translocation (POST) complex to a pre-translocation (PRE) complex, thus giving elongation factor G a second chance to translocate the tRNAs correctly. Binds to ribosomes in a GTP-dependent manner. The protein is Elongation factor 4 of Leptospira borgpetersenii serovar Hardjo-bovis (strain JB197).